A 500-amino-acid chain; its full sequence is Lysine--tRNA ligase (500 aa).

Residues Glu-410 and Glu-417 each contribute to the Mg(2+) site.

Belongs to the class-II aminoacyl-tRNA synthetase family. In terms of assembly, homodimer. Mg(2+) is required as a cofactor.

The protein localises to the cytoplasm. It carries out the reaction tRNA(Lys) + L-lysine + ATP = L-lysyl-tRNA(Lys) + AMP + diphosphate. This Mycoplasma capricolum subsp. capricolum (strain California kid / ATCC 27343 / NCTC 10154) protein is Lysine--tRNA ligase.